The chain runs to 144 residues: MSQSPIQNPTSDPNAQSVQETSESKYGERQIAEGTLITFPNPRVGRRYDIHITLPEFTCKCPFSGYPDFATIHLTYVPDQRVVELKALKLYINSYRDRYISHEESVNQILDDIVAACDPLEITVKGDFLPRGNVHTVIEVHHQK.

The span at 1-21 (MSQSPIQNPTSDPNAQSVQET) shows a compositional bias: polar residues. The tract at residues 1–27 (MSQSPIQNPTSDPNAQSVQETSESKYG) is disordered. Residue C61 is the Thioimide intermediate of the active site. The Proton donor role is filled by D68. Residues 83–85 (VEL) and 102–103 (HE) contribute to the substrate site.

Belongs to the GTP cyclohydrolase I family. QueF type 1 subfamily.

The protein localises to the cytoplasm. It catalyses the reaction 7-aminomethyl-7-carbaguanine + 2 NADP(+) = 7-cyano-7-deazaguanine + 2 NADPH + 3 H(+). Its pathway is tRNA modification; tRNA-queuosine biosynthesis. Functionally, catalyzes the NADPH-dependent reduction of 7-cyano-7-deazaguanine (preQ0) to 7-aminomethyl-7-deazaguanine (preQ1). The protein is NADPH-dependent 7-cyano-7-deazaguanine reductase of Acaryochloris marina (strain MBIC 11017).